A 309-amino-acid polypeptide reads, in one-letter code: Protoheme IX farnesyltransferase (309 aa).

9 helical membrane passes run 35 to 55 (IGIVNSNLITTFTGLWLALYF), 64 to 84 (LHIVFFTLFGSALVIAGSCSI), 114 to 134 (VLWLGIIFITVGTLSLLMTTV), 135 to 155 (TAAIVGLIGAITYIFLYTMWS), 161 to 181 (LNTVVGSISGAVPPVIGWTAV), 187 to 207 (VVPLVLFLIMFIWQTPHFLAL), 236 to 256 (IVVWVACLLPLPFYLFSLGVP), 257 to 277 (FLTVATLLNVGWLALGLYGFK), and 289 to 309 (FIYSLNYLTILFVAMVIATLW).

It belongs to the UbiA prenyltransferase family. Protoheme IX farnesyltransferase subfamily. In terms of assembly, interacts with CtaA.

Its subcellular location is the cell membrane. The catalysed reaction is heme b + (2E,6E)-farnesyl diphosphate + H2O = Fe(II)-heme o + diphosphate. It participates in porphyrin-containing compound metabolism; heme O biosynthesis; heme O from protoheme: step 1/1. Its function is as follows. Converts heme B (protoheme IX) to heme O by substitution of the vinyl group on carbon 2 of heme B porphyrin ring with a hydroxyethyl farnesyl side group. The sequence is that of Protoheme IX farnesyltransferase from Geobacillus sp. (strain WCH70).